The primary structure comprises 466 residues: Cysteine--tRNA ligase (466 aa).

Cysteine 29 serves as a coordination point for Zn(2+). Residues proline 31–asparagine 41 carry the 'HIGH' region motif. Zn(2+) contacts are provided by cysteine 209, histidine 234, and glutamate 238. Residues lysine 266 to serine 270 carry the 'KMSKS' region motif. Lysine 269 serves as a coordination point for ATP. At serine 270 the chain carries Phosphoserine.

Belongs to the class-I aminoacyl-tRNA synthetase family. As to quaternary structure, monomer. The cofactor is Zn(2+).

It localises to the cytoplasm. It catalyses the reaction tRNA(Cys) + L-cysteine + ATP = L-cysteinyl-tRNA(Cys) + AMP + diphosphate. This Bacillus pumilus (strain SAFR-032) protein is Cysteine--tRNA ligase.